Here is a 130-residue protein sequence, read N- to C-terminus: Small ribosomal subunit protein uS11 (130 aa).

It belongs to the universal ribosomal protein uS11 family. Part of the 30S ribosomal subunit. Interacts with proteins S7 and S18. Binds to IF-3.

In terms of biological role, located on the platform of the 30S subunit, it bridges several disparate RNA helices of the 16S rRNA. Forms part of the Shine-Dalgarno cleft in the 70S ribosome. In Psychrobacter sp. (strain PRwf-1), this protein is Small ribosomal subunit protein uS11.